Reading from the N-terminus, the 221-residue chain is Queuosine precursor transporter (221 aa).

Residues 1 to 12 (MNVFSQTQRYKA) lie on the Cytoplasmic side of the membrane. A helical transmembrane segment spans residues 13–33 (LFWLSLFHLLVITSSNYLVQL). A topological domain (periplasmic) is located at residue P34. Residues 35-55 (VSILGFHTTWGAFSFPFIFLA) form a helical membrane-spanning segment. The Cytoplasmic portion of the chain corresponds to 56 to 70 (TDLTVRIFGAPLARR). A helical transmembrane segment spans residues 71-91 (IIFAVMIPALLISYVISSLFY). The Periplasmic segment spans residues 92-97 (MGSWQG). The chain crosses the membrane as a helical span at residues 98–118 (FGALAHFNLFVARIATASFMA). Residues 119–143 (YALGQILDVHVFNRLRQSRRWWLAP) are Cytoplasmic-facing. A helical transmembrane segment spans residues 144–164 (TASTLFGNVSDTLAFFFIAFW). The Periplasmic portion of the chain corresponds to 165–184 (RSPDAFMAEHWMEIALVDYC). The chain crosses the membrane as a helical span at residues 185-205 (FKVLISIVFFLPMYGVLLNML). Residues 206–221 (LKRLADKSEINALQAS) are Cytoplasmic-facing.

Belongs to the vitamin uptake transporter (VUT/ECF) (TC 2.A.88) family. Q precursor transporter subfamily.

It is found in the cell inner membrane. Functionally, involved in the import of queuosine (Q) precursors, required for Q precursor salvage. Transports 7-cyano-7-deazaguanine (preQ(0)) and 7-aminomethyl-7-deazaguanine (preQ(1)), with a preference for preQ(0). In Escherichia coli (strain K12), this protein is Queuosine precursor transporter (yhhQ).